The following is a 314-amino-acid chain: Methionyl-tRNA formyltransferase (314 aa).

A (6S)-5,6,7,8-tetrahydrofolate-binding site is contributed by 113 to 116 (SLLP).

This sequence belongs to the Fmt family.

The catalysed reaction is L-methionyl-tRNA(fMet) + (6R)-10-formyltetrahydrofolate = N-formyl-L-methionyl-tRNA(fMet) + (6S)-5,6,7,8-tetrahydrofolate + H(+). Functionally, attaches a formyl group to the free amino group of methionyl-tRNA(fMet). The formyl group appears to play a dual role in the initiator identity of N-formylmethionyl-tRNA by promoting its recognition by IF2 and preventing the misappropriation of this tRNA by the elongation apparatus. This is Methionyl-tRNA formyltransferase from Ectopseudomonas mendocina (strain ymp) (Pseudomonas mendocina).